We begin with the raw amino-acid sequence, 355 residues long: 3-dehydroquinate synthase (355 aa).

NAD(+) is bound by residues 71–76 (EGEERK), 105–109 (GVVGD), 129–130 (TS), K142, and K151. Zn(2+)-binding residues include E184, H246, and H263.

Belongs to the sugar phosphate cyclases superfamily. Dehydroquinate synthase family. It depends on Co(2+) as a cofactor. Requires Zn(2+) as cofactor. The cofactor is NAD(+).

Its subcellular location is the cytoplasm. The catalysed reaction is 7-phospho-2-dehydro-3-deoxy-D-arabino-heptonate = 3-dehydroquinate + phosphate. It functions in the pathway metabolic intermediate biosynthesis; chorismate biosynthesis; chorismate from D-erythrose 4-phosphate and phosphoenolpyruvate: step 2/7. Functionally, catalyzes the conversion of 3-deoxy-D-arabino-heptulosonate 7-phosphate (DAHP) to dehydroquinate (DHQ). The sequence is that of 3-dehydroquinate synthase from Streptococcus pneumoniae (strain 70585).